The primary structure comprises 339 residues: Annexin A2 (339 aa).

S2 bears the N-acetylserine mark. The S100A10-binding site stretch occupies residues 2–24; the sequence is STVHEILCKLSLEGDHSTPASAY. At Y24 the chain carries Phosphotyrosine; by SRC. Phosphoserine; by PKC is present on S26. 2 Annexin repeats span residues 33–104 and 105–176; these read FDAE…GLLK and TPAQ…ALAK. K49 carries the N6-acetyllysine; alternate modification. Residue K49 forms a Glycyl lysine isopeptide (Lys-Gly) (interchain with G-Cter in SUMO1); alternate linkage. K49 participates in a covalent cross-link: Glycyl lysine isopeptide (Lys-Gly) (interchain with G-Cter in SUMO2); alternate. K152 is subject to N6-acetyllysine. S184 is subject to Phosphoserine. Annexin repeat units follow at residues 189–261 and 265–336; these read ELID…NLVQ and NKPL…YLCG. Y199 carries the phosphotyrosine modification. K227 carries the N6-acetyllysine modification.

The protein belongs to the annexin family. In terms of assembly, heterotetramer containing 2 light chains of S100A10/p11 and 2 heavy chains of ANXA2/p36. Interacts with ATP1B1. Interacts with DYSF. Interacts with COCH. Interacts (via repeat Annexin 1) with PCSK9 (via the C-terminal domain); the interaction inhibits the degradation of LDLR. Interacts with CEACAM1 (via the cytoplasmic domain); this interaction is regulated by phosphorylation of CEACAM1. Interacts with APPL2 and APPL1; targets APPL2 to endosomes and acting in parallel to RAB5A. Interacts with S100A4. May interact with UBAP2. Interacts with PLEKHG4B; this interaction is required for PLEKHG4B localization to cell-cell adhesions. (Microbial infection) Interacts with classical swine fever virus envelope glycoprotein E2. ISGylated.

It is found in the secreted. It localises to the extracellular space. Its subcellular location is the extracellular matrix. The protein resides in the basement membrane. The protein localises to the melanosome. In terms of biological role, calcium-regulated membrane-binding protein whose affinity for calcium is greatly enhanced by anionic phospholipids. It binds two calcium ions with high affinity. May be involved in heat-stress response. Inhibits PCSK9-enhanced LDLR degradation, probably reduces PCSK9 protein levels via a translational mechanism but also competes with LDLR for binding with PCSK9. Binds to endosomes damaged by phagocytosis of particulate wear debris and participates in endosomal membrane stabilization, thereby limiting NLRP3 inflammasome activation. Required for endothelial cell surface plasmin generation and may support fibrinolytic surveillance and neoangiogenesis. (Microbial infection) May serve as a receptor for classical swine fever virus (CSFV). Promotes CSFV infection. The chain is Annexin A2 (ANXA2) from Sus scrofa (Pig).